A 338-amino-acid chain; its full sequence is uncharacterized protein (338 aa).

The first 29 residues, 1–29 (MIKQLYKNITICSLAISTALTVFPATSYA), serve as a signal peptide directing secretion.

The protein belongs to the aerolysin family.

This is an uncharacterized protein from Staphylococcus aureus (strain Mu50 / ATCC 700699).